We begin with the raw amino-acid sequence, 1016 residues long: Coiled-coil domain-containing protein 57 (1016 aa).

Residues 1–503 form a centrosomal targeting domain region; that stretch reads MLPLCSEREL…HGLLPGQEAQ (503 aa). 3 coiled-coil regions span residues 14-607, 676-700, and 748-775; these read LARK…PVKT, SEVD…KHLK, and VTHL…LLEM. Disordered regions lie at residues 500-519 and 549-573; these read QEAQ…DSPS and HLPP…DSTP. Residues 604–1016 form a microtubule binding domain region; it reads PVKTSVATAD…SRIRNYNLKD (413 aa). Disordered regions lie at residues 781-921 and 933-1016; these read AEQG…LASS and GSSP…NLKD. 2 stretches are compositionally biased toward polar residues: residues 846-859 and 934-945; these read QPHS…TNTP and SSPSGVPSQDNS.

Interacts with CEP63; the interaction is required for their location to proximal end of centrioles. Interacts with microtubules.

The protein localises to the cytoplasm. It is found in the cytoskeleton. Its subcellular location is the microtubule organizing center. The protein resides in the centrosome. It localises to the centriolar satellite. The protein localises to the centriole. It is found in the spindle. Pleiotropic regulator of centriole duplication, mitosis, and ciliogenesis. Critical interface between centrosome and microtubule-mediated cellular processes. Centriole duplication protein required for recruitment of CEP63, CEP152, and PLK4 to the centrosome. Independent of its centrosomal targeting, localizes to and interacts with microtubules and regulates microtubule nucleation, stability, and mitotic progression. The protein is Coiled-coil domain-containing protein 57 of Mus musculus (Mouse).